A 64-amino-acid chain; its full sequence is Large ribosomal subunit protein bL28 (64 aa).

A disordered region spans residues 1 to 23 (MSKECYFTGRKTVSSNNRSHAMN). The span at 11 to 23 (KTVSSNNRSHAMN) shows a compositional bias: polar residues.

Belongs to the bacterial ribosomal protein bL28 family.

The protein is Large ribosomal subunit protein bL28 of Lactococcus lactis subsp. cremoris (strain SK11).